The following is a 272-amino-acid chain: SWIRM domain-containing protein laf2 (272 aa).

The segment at 86 to 148 (HVGRWANRHS…RRRKSARGNG (63 aa)) is disordered. Low complexity-rich tracts occupy residues 95-120 (SNVSSSSGSRGRSSVSSRDSSPSYSG) and 127-136 (RSISSSPSTI). S130 and S132 each carry phosphoserine. T135 is modified (phosphothreonine). The SWIRM domain occupies 182–272 (LKAEWKGPPL…AFHEVGFFDD (91 aa)).

Component of the RPD3C(L) complex.

It is found in the nucleus. Its function is as follows. Component of the RPD3C(L) histone deacetylase complex (HDAC) responsible for the deacetylation of lysine residues on the N-terminal part of the core histones (H2A, H2B, H3 and H4). Histone deacetylation gives a tag for epigenetic repression and plays an important role in transcriptional regulation, cell cycle progression and developmental events. The sequence is that of SWIRM domain-containing protein laf2 (laf2) from Schizosaccharomyces pombe (strain 972 / ATCC 24843) (Fission yeast).